Here is a 483-residue protein sequence, read N- to C-terminus: MFS-type transporter hepF (483 aa).

Residues 1–31 form a disordered region; sequence METPAGKADRPRDHDSEQSQDNVVSWEGEDD. Residues 7–17 are compositionally biased toward basic and acidic residues; that stretch reads KADRPRDHDSE. The next 11 helical transmembrane spans lie at 89–109, 124–144, 147–167, 179–199, 206–226, 276–296, 311–331, 357–377, 385–405, 416–436, and 448–468; these read TIVV…AAPI, ILYT…MLIV, FFAG…VADL, FVTL…GFLT, WVFW…ILFT, PISL…YVLV, IGIS…GLWI, PMMI…GWSV, MPIV…MPMV, AASA…VLPL, and GWGN…LIAI.

It belongs to the major facilitator superfamily.

The protein resides in the cell membrane. Functionally, MFS-type transporter; part of the gene cluster that mediates the biosynthesis of heptelidic acid (HA), a sesquiterpene lactone that acts as an inhibitor of glyceraldehyde-3-phosphatedehydrogenase (GAPDH) and a growth inhibitor of the salt-tolerant lactic acid bacteria in soy sauce brewing. Might be required for efficient secretion of heptelidic acid. The sequence is that of MFS-type transporter hepF (hepF) from Aspergillus oryzae (strain ATCC 42149 / RIB 40) (Yellow koji mold).